The chain runs to 297 residues: 4-hydroxy-tetrahydrodipicolinate synthase (297 aa).

Threonine 46 contributes to the pyruvate binding site. Tyrosine 136 (proton donor/acceptor) is an active-site residue. The Schiff-base intermediate with substrate role is filled by lysine 165. Threonine 206 lines the pyruvate pocket.

The protein belongs to the DapA family. In terms of assembly, homotetramer; dimer of dimers.

The protein localises to the cytoplasm. It carries out the reaction L-aspartate 4-semialdehyde + pyruvate = (2S,4S)-4-hydroxy-2,3,4,5-tetrahydrodipicolinate + H2O + H(+). Its pathway is amino-acid biosynthesis; L-lysine biosynthesis via DAP pathway; (S)-tetrahydrodipicolinate from L-aspartate: step 3/4. Functionally, catalyzes the condensation of (S)-aspartate-beta-semialdehyde [(S)-ASA] and pyruvate to 4-hydroxy-tetrahydrodipicolinate (HTPA). This is 4-hydroxy-tetrahydrodipicolinate synthase from Sulfurimonas denitrificans (strain ATCC 33889 / DSM 1251) (Thiomicrospira denitrificans (strain ATCC 33889 / DSM 1251)).